The primary structure comprises 142 residues: DPDGCGPGWVPTPGGCLGFFSRELSWSRAESFCRRWGPGSHLAAVRSAAELRLLAELLNASRGGDGSGEGADGRVWIGLHRPAGSRSWRWSDGTAPRFASWHRTAKARRGGRCAALRDEEAFTSWAARPCTERNAFVCKAAA.

3 disulfide bridges follow: Cys5–Cys16, Cys33–Cys138, and Cys113–Cys130. The region spanning 12 to 139 is the C-type lectin domain; the sequence is TPGGCLGFFS…CTERNAFVCK (128 aa). N-linked (GlcNAc...) asparagine glycosylation occurs at Asn59. Phosphoserine occurs at positions 61 and 67.

As to expression, expressed in the shell gland mucosa. Not detected in hen liver, magnum, isthmus, cartilage, bone or in egg white or yolk.

Its subcellular location is the secreted. It localises to the extracellular space. The protein localises to the extracellular matrix. Its function is as follows. May form proteinaceous networks during the construction of the eggshell which then may control the deposition of the mineral phase. The sequence is that of Ovocleidin-17 from Gallus gallus (Chicken).